The sequence spans 127 residues: Glycine cleavage system H protein (127 aa).

In terms of domain architecture, Lipoyl-binding spans 24–105 (TALAGITDFA…YGEGWLVKIK (82 aa)). K65 is subject to N6-lipoyllysine.

This sequence belongs to the GcvH family. As to quaternary structure, the glycine cleavage system is composed of four proteins: P, T, L and H. Requires (R)-lipoate as cofactor.

Its function is as follows. The glycine cleavage system catalyzes the degradation of glycine. The H protein shuttles the methylamine group of glycine from the P protein to the T protein. The polypeptide is Glycine cleavage system H protein (Chlorobium phaeobacteroides (strain DSM 266 / SMG 266 / 2430)).